Consider the following 527-residue polypeptide: DNA polymerase epsilon subunit 2 (527 aa).

This sequence belongs to the DNA polymerase epsilon subunit B family. As to quaternary structure, component of the DNA polymerase epsilon complex consisting of four subunits: the catalytic subunit POLE and the accessory subunits POLE2, POLE3 and POLE4.

It localises to the nucleus. In terms of biological role, accessory component of the DNA polymerase epsilon complex. Participates in DNA repair and in chromosomal DNA replication. This Bos taurus (Bovine) protein is DNA polymerase epsilon subunit 2 (POLE2).